Reading from the N-terminus, the 749-residue chain is 5-methyltetrahydropteroyltriglutamate--homocysteine methyltransferase (749 aa).

Residues 15-18 and K114 contribute to the 5-methyltetrahydropteroyltri-L-glutamate site; that span reads RELK. L-homocysteine contacts are provided by residues 425–427 and E478; that span reads IGS. Residues 425–427 and E478 contribute to the L-methionine site; that span reads IGS. Residue W555 participates in 5-methyltetrahydropteroyltri-L-glutamate binding. L-homocysteine is bound at residue D593. D593 contacts L-methionine. E599 lines the 5-methyltetrahydropteroyltri-L-glutamate pocket. H636, C638, and E660 together coordinate Zn(2+). Residue H689 is the Proton donor of the active site. A Zn(2+)-binding site is contributed by C721.

The protein belongs to the vitamin-B12 independent methionine synthase family. The cofactor is Zn(2+).

The enzyme catalyses 5-methyltetrahydropteroyltri-L-glutamate + L-homocysteine = tetrahydropteroyltri-L-glutamate + L-methionine. It functions in the pathway amino-acid biosynthesis; L-methionine biosynthesis via de novo pathway; L-methionine from L-homocysteine (MetE route): step 1/1. Functionally, catalyzes the transfer of a methyl group from 5-methyltetrahydrofolate to homocysteine resulting in methionine formation. The protein is 5-methyltetrahydropteroyltriglutamate--homocysteine methyltransferase of Streptococcus pneumoniae serotype 4 (strain ATCC BAA-334 / TIGR4).